We begin with the raw amino-acid sequence, 284 residues long: RNA polymerase sigma factor RpoH (284 aa).

Positions 53-122 (LILSHLRFVV…IHEYVLRNWR (70 aa)) are sigma-70 factor domain-2. The Interaction with polymerase core subunit RpoC motif lies at 77–80 (DLIQ). The segment at 228–280 (AMQGLDERSQDIIRARWLDEDNKSTLQELADRYGVSAERVRQLEKNAMKKLRA) is sigma-70 factor domain-4. Residues 253–272 (LQELADRYGVSAERVRQLEK) constitute a DNA-binding region (H-T-H motif).

It belongs to the sigma-70 factor family. RpoH subfamily. As to quaternary structure, interacts with the RNA polymerase core enzyme.

The protein resides in the cytoplasm. Functionally, sigma factors are initiation factors that promote the attachment of RNA polymerase to specific initiation sites and are then released. This sigma factor is involved in regulation of expression of heat shock genes. The polypeptide is RNA polymerase sigma factor RpoH (Escherichia coli O6:H1 (strain CFT073 / ATCC 700928 / UPEC)).